The following is a 320-amino-acid chain: 1-aminocyclopropane-1-carboxylate oxidase (320 aa).

A Fe2OG dioxygenase domain is found at 154–254 (PTFGTKVSNY…RMSLASFYNP (101 aa)). Residues His-178, Asp-180, and His-235 each contribute to the Fe cation site.

It belongs to the iron/ascorbate-dependent oxidoreductase family. Fe cation serves as cofactor.

The catalysed reaction is 1-aminocyclopropane-1-carboxylate + L-ascorbate + O2 = ethene + L-dehydroascorbate + hydrogen cyanide + CO2 + 2 H2O. The protein operates within alkene biosynthesis; ethylene biosynthesis via S-adenosyl-L-methionine; ethylene from S-adenosyl-L-methionine: step 2/2. This Persea americana (Avocado) protein is 1-aminocyclopropane-1-carboxylate oxidase (ACO).